Here is a 166-residue protein sequence, read N- to C-terminus: NAD(P)H-quinone oxidoreductase subunit I, chloroplastic (166 aa).

4Fe-4S ferredoxin-type domains lie at Gly55–Lys84 and Leu95–Glu124. [4Fe-4S] cluster-binding residues include Cys64, Cys67, Cys70, Cys74, Cys104, Cys107, Cys110, and Cys114.

This sequence belongs to the complex I 23 kDa subunit family. As to quaternary structure, NDH is composed of at least 16 different subunits, 5 of which are encoded in the nucleus. It depends on [4Fe-4S] cluster as a cofactor.

The protein localises to the plastid. It is found in the chloroplast thylakoid membrane. It carries out the reaction a plastoquinone + NADH + (n+1) H(+)(in) = a plastoquinol + NAD(+) + n H(+)(out). The enzyme catalyses a plastoquinone + NADPH + (n+1) H(+)(in) = a plastoquinol + NADP(+) + n H(+)(out). In terms of biological role, NDH shuttles electrons from NAD(P)H:plastoquinone, via FMN and iron-sulfur (Fe-S) centers, to quinones in the photosynthetic chain and possibly in a chloroplast respiratory chain. The immediate electron acceptor for the enzyme in this species is believed to be plastoquinone. Couples the redox reaction to proton translocation, and thus conserves the redox energy in a proton gradient. The protein is NAD(P)H-quinone oxidoreductase subunit I, chloroplastic of Aphanactis jamesoniana.